The following is a 180-amino-acid chain: Thebaine synthase 1 (180 aa).

Ser96 serves as a coordination point for thebaine. His111 functions as the Proton acceptor in the catalytic mechanism. Thr127 provides a ligand contact to thebaine.

Belongs to the MLP family. In terms of assembly, homodimer (allosteric) and oligomers. As to expression, expressed in poppy latex.

The enzyme catalyses (7S)-O-acetylsalutaridinol = thebaine + acetate + H(+). Its pathway is alkaloid biosynthesis; morphine biosynthesis. Catalyzes the formation of thebaine from (7S)-salutaridinol 7-O-acetate at the expense of labile hydroxylated by-products, which are preferentially produced by spontaneous allylic elimination. The chain is Thebaine synthase 1 from Papaver somniferum (Opium poppy).